A 95-amino-acid polypeptide reads, in one-letter code: Protein J1 homolog (95 aa).

This sequence belongs to the chordopoxvirinae J1 family. Homodimer. Part of a complex composed of A30, G7, F10 kinase, A15, D2, D3, and J1. Interacts with A45.

Its subcellular location is the virion. It is found in the host cytoplasm. Functionally, late protein which is a part of a large complex required for early virion morphogenesis. This complex participates in the formation of virosomes and the incorporation of virosomal contents into nascent immature virions. J1 protein is required for DNA packaging during immature virions (IV) formation. This chain is Protein J1 homolog, found in Sus scrofa (Pig).